The sequence spans 301 residues: Cytosolic sulfotransferase 2 (301 aa).

A 3'-phosphoadenylyl sulfate-binding site is contributed by 53-58; the sequence is KAGTTW. His115 (proton acceptor) is an active-site residue. Residues Arg137, Ser145, Tyr201, 235–240, and 263–265 contribute to the 3'-phosphoadenylyl sulfate site; these read VQFDVM and RKG.

It belongs to the sulfotransferase 1 family. In terms of tissue distribution, expressed in liver.

The protein resides in the cytoplasm. Inhibited by Co(2+), Zn(2+), Cd(2+) and Pb(2+) ions. Inactivated by Hg(2+) and Cu(2+) ions. Functionally, sulfotransferase that utilizes 3'-phospho-5'-adenylyl sulfate (PAPS) as sulfonate donor to catalyze the sulfate conjugation of a variety of xenobiotic and endogenous compounds, including 2-naphthol, hydroxychlorobiphenyls, T3 (triiodo-L-thyronine), T4 (thyroxine), estrone and DOPA. In Danio rerio (Zebrafish), this protein is Cytosolic sulfotransferase 2.